The primary structure comprises 133 residues: Holo-[acyl-carrier-protein] synthase (133 aa).

Residues Asp8 and Glu57 each coordinate Mg(2+).

This sequence belongs to the P-Pant transferase superfamily. AcpS family. Mg(2+) is required as a cofactor.

The protein resides in the cytoplasm. It carries out the reaction apo-[ACP] + CoA = holo-[ACP] + adenosine 3',5'-bisphosphate + H(+). Functionally, transfers the 4'-phosphopantetheine moiety from coenzyme A to a Ser of acyl-carrier-protein. The protein is Holo-[acyl-carrier-protein] synthase of Bartonella bacilliformis (strain ATCC 35685 / KC583 / Herrer 020/F12,63).